A 219-amino-acid chain; its full sequence is 3-dehydroquinate dehydratase (219 aa).

Residues 28 to 30 and Arg61 contribute to the 3-dehydroquinate site; that span reads ELR. His116 serves as the catalytic Proton donor/acceptor. Lys142 functions as the Schiff-base intermediate with substrate in the catalytic mechanism. 3-dehydroquinate is bound by residues Arg180 and Gln203.

This sequence belongs to the type-I 3-dehydroquinase family. As to quaternary structure, homodimer.

The enzyme catalyses 3-dehydroquinate = 3-dehydroshikimate + H2O. The protein operates within metabolic intermediate biosynthesis; chorismate biosynthesis; chorismate from D-erythrose 4-phosphate and phosphoenolpyruvate: step 3/7. Functionally, involved in the third step of the chorismate pathway, which leads to the biosynthesis of aromatic amino acids. Catalyzes the cis-dehydration of 3-dehydroquinate (DHQ) and introduces the first double bond of the aromatic ring to yield 3-dehydroshikimate. The protein is 3-dehydroquinate dehydratase of Aquifex aeolicus (strain VF5).